A 294-amino-acid polypeptide reads, in one-letter code: Fructose-bisphosphate aldolase class 1 (294 aa).

The active-site Proton acceptor is Glu-176. The active-site Schiff-base intermediate with dihydroxyacetone-P is the Lys-213.

This sequence belongs to the class I fructose-bisphosphate aldolase family.

The enzyme catalyses beta-D-fructose 1,6-bisphosphate = D-glyceraldehyde 3-phosphate + dihydroxyacetone phosphate. Its pathway is carbohydrate degradation; glycolysis; D-glyceraldehyde 3-phosphate and glycerone phosphate from D-glucose: step 4/4. The sequence is that of Fructose-bisphosphate aldolase class 1 from Oceanobacillus iheyensis (strain DSM 14371 / CIP 107618 / JCM 11309 / KCTC 3954 / HTE831).